The primary structure comprises 273 residues: Type IV secretion system protein PtlF homolog (273 aa).

The signal sequence occupies residues 1 to 20 (MMAARMMAAGLAATALSAHA).

Belongs to the TrbG/VirB9 family.

It localises to the cell outer membrane. The sequence is that of Type IV secretion system protein PtlF homolog (ptlF) from Bordetella bronchiseptica (strain ATCC BAA-588 / NCTC 13252 / RB50) (Alcaligenes bronchisepticus).